Reading from the N-terminus, the 109-residue chain is Flowering-promoting factor 1-like protein 1 (109 aa).

The D-box motif lies at 73–81 (RGSLDLISL).

This sequence belongs to the FPF1 family. As to quaternary structure, interacts with RPT4. Post-translationally, ubiquitinated. RPT4 mediates its proteasome-dependent degradation. In terms of tissue distribution, specifically expressed in the apical meristem, the elongation zone of root tip, steles of the branch zone, and the young lateral root. Also expressed in spikes. Expressed in roots and spikes (at protein level).

The protein localises to the cytoplasm. Its subcellular location is the nucleus. In terms of biological role, GTP-binding protein that functions in the development of root systems, which are mediated by auxin. Acts as a cell cycle regulator during root development. Proteasome-mediated degradation of the protein is necessary for the transition of metaphase to anaphase in mitosis. This is Flowering-promoting factor 1-like protein 1 (RAA1) from Oryza sativa subsp. japonica (Rice).